We begin with the raw amino-acid sequence, 895 residues long: Histone-lysine N-methyltransferase EZ3 (895 aa).

Residues 1-13 (MASSSKASDSSSQ) show a composition bias toward low complexity. 2 disordered regions span residues 1–30 (MASSSKASDSSSQRSKRSDQGTGREAAPAS) and 396–446 (SSVS…PGKR). Residues 396–422 (SSVSAEESTTPPSADTSETENASSDMP) show a composition bias toward polar residues. Residues 427–436 (RKYKISKRGP) show a composition bias toward basic residues. An SANT domain is found at 528–578 (TLSCWSALERDLYLKGIEIFGKNSCLIARNLLSGMKTCMEVANYMYNNGAA). The CXC domain maps to 628–732 (AGHPTVRKRI…SLGEPPARGD (105 aa)). The SET domain occupies 747–862 (QRILLGRSDV…ASEELFYDYR (116 aa)). Positions 870-895 (AWARRPEGSKKDEASVSHHRAHKVAR) are disordered. The span at 873–885 (RRPEGSKKDEASV) shows a compositional bias: basic and acidic residues. A compositionally biased stretch (basic residues) spans 886–895 (SHHRAHKVAR).

The protein belongs to the class V-like SAM-binding methyltransferase superfamily. Histone-lysine methyltransferase family. EZ subfamily. Widely expressed.

It localises to the nucleus. It carries out the reaction L-lysyl(27)-[histone H3] + 3 S-adenosyl-L-methionine = N(6),N(6),N(6)-trimethyl-L-lysyl(27)-[histone H3] + 3 S-adenosyl-L-homocysteine + 3 H(+). Functionally, polycomb group (PcG) protein. Catalytic subunit of some PcG multiprotein complex, which methylates 'Lys-27' of histone H3, leading to transcriptional repression of the affected target genes. PcG proteins are not required to initiate repression, but to maintain it during later stages of development. This is Histone-lysine N-methyltransferase EZ3 (EZ3) from Zea mays (Maize).